Here is a 354-residue protein sequence, read N- to C-terminus: S-adenosylmethionine:tRNA ribosyltransferase-isomerase (354 aa).

It belongs to the QueA family. Monomer.

Its subcellular location is the cytoplasm. The catalysed reaction is 7-aminomethyl-7-carbaguanosine(34) in tRNA + S-adenosyl-L-methionine = epoxyqueuosine(34) in tRNA + adenine + L-methionine + 2 H(+). It participates in tRNA modification; tRNA-queuosine biosynthesis. Its function is as follows. Transfers and isomerizes the ribose moiety from AdoMet to the 7-aminomethyl group of 7-deazaguanine (preQ1-tRNA) to give epoxyqueuosine (oQ-tRNA). The polypeptide is S-adenosylmethionine:tRNA ribosyltransferase-isomerase (Salmonella newport (strain SL254)).